A 209-amino-acid chain; its full sequence is Ribosome maturation factor RimM (209 aa).

The PRC barrel domain occupies 103 to 178 (EGATYVSDLV…RIEMVLPQGM (76 aa)). The segment at 184 to 209 (PLSKAEKERQKSEADETREAGERRKR) is disordered. Over residues 187–209 (KAEKERQKSEADETREAGERRKR) the composition is skewed to basic and acidic residues.

Belongs to the RimM family. As to quaternary structure, binds ribosomal protein uS19.

It localises to the cytoplasm. Functionally, an accessory protein needed during the final step in the assembly of 30S ribosomal subunit, possibly for assembly of the head region. Essential for efficient processing of 16S rRNA. May be needed both before and after RbfA during the maturation of 16S rRNA. It has affinity for free ribosomal 30S subunits but not for 70S ribosomes. This is Ribosome maturation factor RimM from Koribacter versatilis (strain Ellin345).